We begin with the raw amino-acid sequence, 465 residues long: Hexokinase-4 (465 aa).

In terms of domain architecture, Hexokinase spans 10–454; sequence ATKKEKVEQI…SGRGAALVSA (445 aa). Residues 67–203 are hexokinase small subdomain; sequence EGSEVGDFLS…DFEMDVVAMV (137 aa). 78–83 contacts ATP; it reads DLGGTN. Residues 151 to 152, 168 to 169, and 204 to 205 each bind substrate; these read SF, TK, and ND. The segment at 204 to 443 is hexokinase large subdomain; sequence NDTVATMISC…CEITFIESEE (240 aa). An ATP-binding site is contributed by Thr-228. Residues Asn-231, Glu-256, and Glu-290 each contribute to the substrate site. ATP-binding positions include 295–296, 332–336, and 411–415; these read GK, TRFVS, and SVYKL.

It belongs to the hexokinase family. Monomer. Interacts with MIDN; the interaction occurs preferentially at low glucose levels and results in inhibition of hexokinase activity. Interacts with GCKR; leading to sequestration in the nucleus.

Its subcellular location is the cytoplasm. It is found in the nucleus. The protein resides in the mitochondrion. The catalysed reaction is a D-hexose + ATP = a D-hexose 6-phosphate + ADP + H(+). It carries out the reaction D-fructose + ATP = D-fructose 6-phosphate + ADP + H(+). The enzyme catalyses D-glucose + ATP = D-glucose 6-phosphate + ADP + H(+). It catalyses the reaction D-mannose + ATP = D-mannose 6-phosphate + ADP + H(+). Its pathway is carbohydrate metabolism; hexose metabolism. It functions in the pathway carbohydrate degradation; glycolysis; D-glyceraldehyde 3-phosphate and glycerone phosphate from D-glucose: step 1/4. Its activity is regulated as follows. Subject to allosteric regulation. Low glucose and high fructose-6-phosphate triggers association with the inhibitor GCKR followed by sequestration in the nucleus. Catalyzes the phosphorylation of hexose, such as D-glucose, D-fructose and D-mannose, to hexose 6-phosphate (D-glucose 6-phosphate, D-fructose 6-phosphate and D-mannose 6-phosphate, respectively). Compared to other hexokinases, has a weak affinity for D-glucose, and is effective only when glucose is abundant. Mainly expressed in pancreatic beta cells and the liver and constitutes a rate-limiting step in glucose metabolism in these tissues. Since insulin secretion parallels glucose metabolism and the low glucose affinity of GCK ensures that it can change its enzymatic activity within the physiological range of glucose concentrations, GCK acts as a glucose sensor in the pancreatic beta cell. In pancreas, plays an important role in modulating insulin secretion. In liver, helps to facilitate the uptake and conversion of glucose by acting as an insulin-sensitive determinant of hepatic glucose usage. Required to provide D-glucose 6-phosphate for the synthesis of glycogen. Mediates the initial step of glycolysis by catalyzing phosphorylation of D-glucose to D-glucose 6-phosphate. The polypeptide is Hexokinase-4 (Mus musculus (Mouse)).